A 662-amino-acid chain; its full sequence is DNA ligase (662 aa).

Residues aspartate 31–aspartate 35 and serine 79–leucine 80 each bind NAD(+). Lysine 121 (N6-AMP-lysine intermediate) is an active-site residue. NAD(+) contacts are provided by arginine 143, glutamate 177, and lysine 313. Zn(2+) contacts are provided by cysteine 406, cysteine 409, cysteine 422, and cysteine 428. Residues valine 586–isoleucine 662 enclose the BRCT domain.

The protein belongs to the NAD-dependent DNA ligase family. LigA subfamily. The cofactor is Mg(2+). Mn(2+) serves as cofactor.

It catalyses the reaction NAD(+) + (deoxyribonucleotide)n-3'-hydroxyl + 5'-phospho-(deoxyribonucleotide)m = (deoxyribonucleotide)n+m + AMP + beta-nicotinamide D-nucleotide.. DNA ligase that catalyzes the formation of phosphodiester linkages between 5'-phosphoryl and 3'-hydroxyl groups in double-stranded DNA using NAD as a coenzyme and as the energy source for the reaction. It is essential for DNA replication and repair of damaged DNA. This Clostridium perfringens (strain SM101 / Type A) protein is DNA ligase.